Reading from the N-terminus, the 152-residue chain is Protein NrdI (152 aa).

The protein belongs to the NrdI family.

Probably involved in ribonucleotide reductase function. The polypeptide is Protein NrdI (Mycolicibacterium vanbaalenii (strain DSM 7251 / JCM 13017 / BCRC 16820 / KCTC 9966 / NRRL B-24157 / PYR-1) (Mycobacterium vanbaalenii)).